Here is a 208-residue protein sequence, read N- to C-terminus: Small ribosomal subunit protein uS9c (208 aa).

The N-terminal 51 residues, 1-51, are a transit peptide targeting the chloroplast; the sequence is MAVSISSLTSSFASLSFTSNLTPKPQTLPMARTKPFSLSNPAVVKPLVITA. T52 carries the N-acetylthreonine modification. Residues 185 to 208 form a disordered region; the sequence is DSRIVERKKPGLKKARKAPQFSKR. A compositionally biased stretch (basic residues) spans 194–208; the sequence is PGLKKARKAPQFSKR.

As to quaternary structure, component of the chloroplast small ribosomal subunit (SSU). Mature 70S chloroplast ribosomes of higher plants consist of a small (30S) and a large (50S) subunit. The 30S small subunit contains 1 molecule of ribosomal RNA (16S rRNA) and 24 different proteins. The 50S large subunit contains 3 rRNA molecules (23S, 5S and 4.5S rRNA) and 33 different proteins. uS9c binds directly to 16S ribosomal RNA. uS9c interacts with translation factor pY (PSRP1).

The protein localises to the plastid. It localises to the chloroplast. Its function is as follows. Component of the chloroplast ribosome (chloro-ribosome), a dedicated translation machinery responsible for the synthesis of chloroplast genome-encoded proteins, including proteins of the transcription and translation machinery and components of the photosynthetic apparatus. This chain is Small ribosomal subunit protein uS9c (PRPS9), found in Spinacia oleracea (Spinach).